The chain runs to 858 residues: Bifunctional uridylyltransferase/uridylyl-removing enzyme (858 aa).

Residues 1–324 (MSAHAAPSPE…PATSGITRVL (324 aa)) form a uridylyltransferase region. Positions 325 to 681 (SADRFVEKQG…ARPSPIGDAL (357 aa)) are uridylyl-removing. An HD domain is found at 443–565 (VDQHILMVLR…VGNERYLTAL (123 aa)). 2 ACT domains span residues 682–763 (QVLV…PSKG) and 790–858 (ILSV…AIAV).

The protein belongs to the GlnD family. The cofactor is Mg(2+).

The enzyme catalyses [protein-PII]-L-tyrosine + UTP = [protein-PII]-uridylyl-L-tyrosine + diphosphate. The catalysed reaction is [protein-PII]-uridylyl-L-tyrosine + H2O = [protein-PII]-L-tyrosine + UMP + H(+). Uridylyltransferase (UTase) activity is inhibited by glutamine, while glutamine activates uridylyl-removing (UR) activity. Functionally, modifies, by uridylylation and deuridylylation, the PII regulatory proteins (GlnB and homologs), in response to the nitrogen status of the cell that GlnD senses through the glutamine level. Under low glutamine levels, catalyzes the conversion of the PII proteins and UTP to PII-UMP and PPi, while under higher glutamine levels, GlnD hydrolyzes PII-UMP to PII and UMP (deuridylylation). Thus, controls uridylylation state and activity of the PII proteins, and plays an important role in the regulation of nitrogen assimilation and metabolism. This chain is Bifunctional uridylyltransferase/uridylyl-removing enzyme, found in Burkholderia orbicola (strain MC0-3).